Consider the following 334-residue polypeptide: Lipoyl synthase (334 aa).

The disordered stretch occupies residues 1-36 (MSDALIAPNASSSEAPQSPAEHYDPTRKQKSADKTA). Residues 7-20 (APNASSSEAPQSPA) show a composition bias toward low complexity. Basic and acidic residues predominate over residues 21–36 (EHYDPTRKQKSADKTA). [4Fe-4S] cluster-binding residues include Cys81, Cys86, Cys92, Cys107, Cys111, Cys114, and Ser321. The Radical SAM core domain maps to 92–310 (CFGKGTATFM…EEEAYKMGFT (219 aa)).

It belongs to the radical SAM superfamily. Lipoyl synthase family. It depends on [4Fe-4S] cluster as a cofactor.

The protein localises to the cytoplasm. The catalysed reaction is [[Fe-S] cluster scaffold protein carrying a second [4Fe-4S](2+) cluster] + N(6)-octanoyl-L-lysyl-[protein] + 2 oxidized [2Fe-2S]-[ferredoxin] + 2 S-adenosyl-L-methionine + 4 H(+) = [[Fe-S] cluster scaffold protein] + N(6)-[(R)-dihydrolipoyl]-L-lysyl-[protein] + 4 Fe(3+) + 2 hydrogen sulfide + 2 5'-deoxyadenosine + 2 L-methionine + 2 reduced [2Fe-2S]-[ferredoxin]. Its pathway is protein modification; protein lipoylation via endogenous pathway; protein N(6)-(lipoyl)lysine from octanoyl-[acyl-carrier-protein]: step 2/2. Catalyzes the radical-mediated insertion of two sulfur atoms into the C-6 and C-8 positions of the octanoyl moiety bound to the lipoyl domains of lipoate-dependent enzymes, thereby converting the octanoylated domains into lipoylated derivatives. The chain is Lipoyl synthase from Cupriavidus taiwanensis (strain DSM 17343 / BCRC 17206 / CCUG 44338 / CIP 107171 / LMG 19424 / R1) (Ralstonia taiwanensis (strain LMG 19424)).